The chain runs to 293 residues: Delta(3,5)-Delta(2,4)-dienoyl-CoA isomerase, mitochondrial (293 aa).

Substrate is bound by residues alanine 84–leucine 88 and glycine 142.

The protein belongs to the enoyl-CoA hydratase/isomerase family.

The protein resides in the mitochondrion. It catalyses the reaction (3E,5Z)-octadienoyl-CoA = (2E,4E)-octadienoyl-CoA. The enzyme catalyses (3E,5Z,8Z,11Z,14Z)-eicosapentaenoyl-CoA = (2E,4E,8Z,11Z,14Z)-eicosapentaenoyl-CoA. The protein operates within lipid metabolism; fatty acid beta-oxidation. Functionally, isomerization of 3-trans,5-cis-dienoyl-CoA to 2-trans,4-trans-dienoyl-CoA. This is Delta(3,5)-Delta(2,4)-dienoyl-CoA isomerase, mitochondrial (ech1) from Dictyostelium discoideum (Social amoeba).